The following is a 2408-amino-acid chain: Protein ELYS (2408 aa).

Residues 1–492 (MQNLEAQVTG…SGLIHFACTG (492 aa)) form a seven-bladed beta propeller repeats region. The tract at residues 1016–2408 (YSLPSLVWRE…AKPVTRRKMR (1393 aa)) is disordered. Polar residues predominate over residues 1124-1145 (PLTSSDTDNNQTPHKSPLLKTS). A compositionally biased stretch (acidic residues) spans 1457–1466 (NDQDSEEIEE). Composition is skewed to polar residues over residues 1705–1719 (INEGQVSPNRDQSTL) and 1735–1750 (PADSSTDIIGNITLPT). Positions 2136–2149 (QASKIQEDLSDTPR) are enriched in basic and acidic residues. 2 sufficient for chromatin-binding regions span residues 2281-2359 (STQY…PVEI) and 2359-2408 (IKLI…RKMR). The interval 2281 to 2408 (STQYVFSPPS…AKPVTRRKMR (128 aa)) is sufficient to block nuclear pore assembly. The segment at residues 2329-2341 (SKPRGRPPKHKAK) is a DNA-binding region (a.T hook). Residues 2331 to 2348 (PRGRPPKHKAKAVTRVLK) show a composition bias toward basic residues. Basic and acidic residues predominate over residues 2378–2389 (DSTEAKGAEKIS).

Belongs to the ELYS family. Interacts with the Nup107-160 subcomplex of the NPC.

The protein localises to the nucleus. It is found in the nuclear pore complex. It localises to the cytoplasm. Its subcellular location is the nucleoplasm. Functionally, required for the assembly of a functional nuclear pore complex (NPC) on the surface of chromosomes as nuclei form at the end of mitosis. May initiate NPC assembly by binding to chromatin and recruiting the Nup107-160 subcomplex, which may in turn recruit membrane vesicles containing pom121 and tmem48/ndc1. Association with chromatin may require the presence of the mcm2-mcm7 complex, suggesting a mechanism for coordination of nuclear assembly and the inactivation of replication licensing. This is Protein ELYS (ahctf1) from Xenopus laevis (African clawed frog).